The following is a 146-amino-acid chain: Large ribosomal subunit protein uL15 (146 aa).

Positions 1 to 13 (MKLHELHSAEGSR) are enriched in basic and acidic residues. The tract at residues 1 to 55 (MKLHELHSAEGSRRNRKRVGRGTSSGYGKTSGRGQKGQLARQGGHTRLGFEGGQM) is disordered. Over residues 23–35 (TSSGYGKTSGRGQ) the composition is skewed to gly residues.

The protein belongs to the universal ribosomal protein uL15 family. Part of the 50S ribosomal subunit.

Its function is as follows. Binds to the 23S rRNA. The chain is Large ribosomal subunit protein uL15 from Lactobacillus helveticus (strain DPC 4571).